Consider the following 320-residue polypeptide: R2-like ligand binding oxidase (320 aa).

Glutamate 68, glutamate 101, and histidine 104 together coordinate Mn(2+). Residues 71 to 162 constitute a cross-link (3-(O4'-tyrosyl)-valine (Val-Tyr)); sequence VTKDIQPFMS…AAQVRASVVY (92 aa). Glutamate 101 serves as a coordination point for Fe cation. Residues glutamate 167, glutamate 202, and histidine 205 each coordinate Fe cation.

It belongs to the ribonucleoside diphosphate reductase small chain family. R2-like ligand binding oxidase subfamily. In terms of assembly, homodimer. Requires Fe cation as cofactor. The cofactor is Mn(2+).

Functionally, probable oxidase that might be involved in lipid metabolism. This chain is R2-like ligand binding oxidase (nrdB), found in Mycolicibacterium smegmatis (strain ATCC 700084 / mc(2)155) (Mycobacterium smegmatis).